The chain runs to 206 residues: Probable NAD(+) phosphorylase Rv3189 (206 aa).

This sequence belongs to the MbcT/ParT/Res family. Forms a heterotetramer with cognate antitoxin Rv3188.

It catalyses the reaction phosphate + NAD(+) = ADP-alpha-D-ribose 1''-phosphate + nicotinamide + H(+). In terms of biological role, probable toxic component of a type II toxin-antitoxin (TA) system. Degrades NAD(+) by phosphorolysis. Neutralized by its cognate antitoxin Rv3188. This Mycobacterium tuberculosis (strain ATCC 25618 / H37Rv) protein is Probable NAD(+) phosphorylase Rv3189.